The primary structure comprises 337 residues: Cysteine synthase 3 (337 aa).

Lysine 47 is subject to N6-(pyridoxal phosphate)lysine. Residues asparagine 78, 182-186 (GSSGT), and serine 270 each bind pyridoxal 5'-phosphate.

Belongs to the cysteine synthase/cystathionine beta-synthase family. In terms of assembly, homodimer. Pyridoxal 5'-phosphate is required as a cofactor.

It catalyses the reaction O-acetyl-L-serine + hydrogen sulfide = L-cysteine + acetate. The protein operates within amino-acid biosynthesis; L-cysteine biosynthesis; L-cysteine from L-serine: step 2/2. Its function is as follows. Primarily catalyzes the formation of cysteine and acetate from O-acetylserine and hydrogen sulfide. Can also catalyze the formation of cysteine and acetate from S-sulfocysteine and hydrogen sulfide and the formation of cyanoalanine and hydrogen sulfide from either S-sulfocysteine or O-acetylserine and hydrogen cyanide. This chain is Cysteine synthase 3, found in Caenorhabditis elegans.